We begin with the raw amino-acid sequence, 702 residues long: Polyribonucleotide nucleotidyltransferase (702 aa).

Asp-485 and Asp-491 together coordinate Mg(2+). The KH domain occupies 552-611; that stretch reads PKTSTLQIDPEKIRDVIGAGGKVINKIIADTGVKIDIKEDGLVYVSSAESEGVKEAVKII. The region spanning 621 to 689 is the S1 motif domain; sequence GEIYLGKVTK…SQGRINLSRK (69 aa).

The protein belongs to the polyribonucleotide nucleotidyltransferase family. It depends on Mg(2+) as a cofactor.

It localises to the cytoplasm. It carries out the reaction RNA(n+1) + phosphate = RNA(n) + a ribonucleoside 5'-diphosphate. Involved in mRNA degradation. Catalyzes the phosphorolysis of single-stranded polyribonucleotides processively in the 3'- to 5'-direction. The chain is Polyribonucleotide nucleotidyltransferase from Clostridium perfringens (strain ATCC 13124 / DSM 756 / JCM 1290 / NCIMB 6125 / NCTC 8237 / Type A).